The following is a 652-amino-acid chain: Phosphomethylpyrimidine synthase (652 aa).

Substrate-binding positions include asparagine 235, methionine 264, tyrosine 293, histidine 329, 349-351, 390-393, and glutamate 429; these read SRG and DGMR. Histidine 433 lines the Zn(2+) pocket. Tyrosine 456 provides a ligand contact to substrate. Histidine 497 is a Zn(2+) binding site. Residues cysteine 577, cysteine 580, and cysteine 585 each coordinate [4Fe-4S] cluster.

It belongs to the ThiC family. In terms of assembly, homodimer. The cofactor is [4Fe-4S] cluster.

The enzyme catalyses 5-amino-1-(5-phospho-beta-D-ribosyl)imidazole + S-adenosyl-L-methionine = 4-amino-2-methyl-5-(phosphooxymethyl)pyrimidine + CO + 5'-deoxyadenosine + formate + L-methionine + 3 H(+). It functions in the pathway cofactor biosynthesis; thiamine diphosphate biosynthesis. Catalyzes the synthesis of the hydroxymethylpyrimidine phosphate (HMP-P) moiety of thiamine from aminoimidazole ribotide (AIR) in a radical S-adenosyl-L-methionine (SAM)-dependent reaction. The chain is Phosphomethylpyrimidine synthase from Shewanella sediminis (strain HAW-EB3).